We begin with the raw amino-acid sequence, 195 residues long: MKLMVLQLLLWHSALWTVHEATPLGPARSLPQSFLLKCLEQVRKIQADGAELQERLCAAHKLCHPEELMLLRHSLGIPQAPLSSCSSQSLQLTSCLNQLHGGLFLYQGLLQALAGISPELAPTLDTLQLDVTDFATNIWLQMEDLGAAPAVQPTQGAMPTFTSAFQRRAGGVLVASQLHRFLELAYRGLRYLAEP.

Residues 1 to 21 (MKLMVLQLLLWHSALWTVHEA) form the signal peptide. Intrachain disulfides connect C57–C63 and C85–C95. O-linked (GalNAc...) threonine glycosylation occurs at T154.

It belongs to the IL-6 superfamily. In terms of assembly, monomer. In terms of processing, O-glycosylated.

It is found in the secreted. Its function is as follows. Granulocyte/macrophage colony-stimulating factors are cytokines that act in hematopoiesis by controlling the production, differentiation, and function of 2 related white cell populations of the blood, the granulocytes and the monocytes-macrophages. This CSF induces granulocytes. This chain is Granulocyte colony-stimulating factor (CSF3), found in Bos taurus (Bovine).